The chain runs to 512 residues: PTS system mannitol-specific EIICB component (512 aa).

The Cytoplasmic segment spans residues Met-1 to Asn-28. A PTS EIIC type-2 domain is found at Phe-17–Asp-349. The chain crosses the membrane as a helical span at residues Ile-29 to Asn-50. Residues Lys-51–Ala-54 lie on the Extracellular side of the membrane. Residues Thr-55–Arg-75 traverse the membrane as a helical segment. Topologically, residues Leu-76 to Phe-139 are cytoplasmic. Residues Ser-140–Lys-161 traverse the membrane as a helical segment. Topologically, residues Phe-162 to Ala-170 are extracellular. Residues Val-171–Lys-191 form a helical membrane-spanning segment. Residues Ile-192–Ala-278 lie on the Cytoplasmic side of the membrane. The chain crosses the membrane as a helical span at residues Val-279–Lys-298. Topologically, residues Ser-299–Phe-318 are extracellular. The helical transmembrane segment at Leu-319–Met-340 threads the bilayer. Residues Lys-341 to Ala-512 are Cytoplasmic-facing. Residues Ala-355–Leu-402 form a disordered region. Positions Ser-365–Lys-376 are enriched in low complexity. Positions Thr-380–Ser-392 are enriched in polar residues. Positions Asn-419–Ala-512 constitute a PTS EIIB type-2 domain. Residue Cys-425 is the Phosphocysteine intermediate; for EIIB activity of the active site. Cys-425 is modified (phosphocysteine; by EIIA).

Homodimer.

The protein localises to the cell membrane. The enzyme catalyses D-mannitol(out) + N(pros)-phospho-L-histidyl-[protein] = D-mannitol 1-phosphate(in) + L-histidyl-[protein]. In terms of biological role, the phosphoenolpyruvate-dependent sugar phosphotransferase system (sugar PTS), a major carbohydrate active transport system, catalyzes the phosphorylation of incoming sugar substrates concomitantly with their translocation across the cell membrane. The enzyme II CmtAB PTS system is involved in D-mannitol transport. The protein is PTS system mannitol-specific EIICB component (mtlA) of Staphylococcus aureus (strain Mu50 / ATCC 700699).